We begin with the raw amino-acid sequence, 417 residues long: D-glycerate 2-kinase (417 aa).

It belongs to the glycerate kinase type-1 family. In terms of assembly, homodimer. Requires Mg(2+) as cofactor.

The catalysed reaction is (R)-glycerate + ATP = (2R)-2-phosphoglycerate + ADP + H(+). Functionally, involved in the degradation of serine via 3-hydroxypyruvate. Catalyzes the ATP-dependent phosphorylation of D-glycerate to 2-phosphoglycerate. This Thermotoga maritima (strain ATCC 43589 / DSM 3109 / JCM 10099 / NBRC 100826 / MSB8) protein is D-glycerate 2-kinase.